A 444-amino-acid chain; its full sequence is 1,4-beta-D-glucan glucohydrolase (444 aa).

E164 acts as the Proton donor in catalysis. The Nucleophile role is filled by E349.

It belongs to the glycosyl hydrolase 1 family. Monomer.

The enzyme catalyses Hydrolysis of (1-&gt;4)-linkages in (1-&gt;4)-beta-D-glucans, to remove successive glucose units.. It catalyses the reaction Hydrolysis of terminal, non-reducing beta-D-glucosyl residues with release of beta-D-glucose.. It participates in glycan metabolism; cellulose degradation. The protein operates within glycan metabolism; beta-D-glucan degradation. Activated by glucose up to 200 mM when p-nitrophenyl-beta-glucoside is used as the substrate. This activation by end product concentrations may be due to a transglycosylation activity of the enzyme. In terms of biological role, broad substrate specificity glycosidase. Releases glucose from soluble glucooligomers, with a preference for longer oligomers; acts more readily on cellotetraose than on cellobiose. Displays similar activities towards the disaccharides lactose and cellobiose. Is also able to hydrolyze various aryl-beta-glycosides in vitro. This is 1,4-beta-D-glucan glucohydrolase from Thermotoga neapolitana (strain ATCC 49049 / DSM 4359 / NBRC 107923 / NS-E).